The chain runs to 426 residues: Synaptotagmin-13 (426 aa).

At 1–6 (MVLSVP) the chain is on the vesicular side. A helical membrane pass occupies residues 7–29 (VIALGATLGTATSILALCGVTCL). The Cytoplasmic segment spans residues 30 to 426 (CRHMHPKKGL…QIAMWHQLHL (397 aa)). C2 domains are found at residues 158–275 (QAPK…AQWG) and 287–422 (GAGE…AMWH).

It belongs to the synaptotagmin family. In terms of assembly, interacts with NRXN1. As to expression, expressed in brain, pancreas and kidney.

It is found in the membrane. Functionally, may be involved in transport vesicle docking to the plasma membrane. In Homo sapiens (Human), this protein is Synaptotagmin-13 (SYT13).